The chain runs to 554 residues: Formate--tetrahydrofolate ligase (554 aa).

64 to 71 (TPYGEGKT) lines the ATP pocket.

This sequence belongs to the formate--tetrahydrofolate ligase family.

It catalyses the reaction (6S)-5,6,7,8-tetrahydrofolate + formate + ATP = (6R)-10-formyltetrahydrofolate + ADP + phosphate. It participates in one-carbon metabolism; tetrahydrofolate interconversion. The polypeptide is Formate--tetrahydrofolate ligase (Caldicellulosiruptor saccharolyticus (strain ATCC 43494 / DSM 8903 / Tp8T 6331)).